The following is a 375-amino-acid chain: F420-dependent formate dehydrogenase 2 subunit beta (375 aa).

4Fe-4S ferredoxin-type domains follow at residues 268-291 and 320-349; these read PEPE…DVCP and IRLS…AKIY. Residues C280, C283, C286, C290, C329, C332, C335, and C339 each coordinate [4Fe-4S] cluster.

Belongs to the FrhB family. As to quaternary structure, dimer of an alpha (FdhA2) and a beta (FdhB2) subunit. [4Fe-4S] cluster is required as a cofactor. Requires FAD as cofactor. The cofactor is Zn(2+).

It catalyses the reaction oxidized coenzyme F420-(gamma-L-Glu)(n) + formate + 2 H(+) = reduced coenzyme F420-(gamma-L-Glu)(n) + CO2. In terms of biological role, catalyzes the oxidation of formate to carbon dioxide, with coenzyme F420 as the electron acceptor. In vitro can also use methyl viologen as electron acceptor. The chain is F420-dependent formate dehydrogenase 2 subunit beta from Methanococcus maripaludis (strain DSM 14266 / JCM 13030 / NBRC 101832 / S2 / LL).